A 259-amino-acid chain; its full sequence is UPF0246 protein PFLU_0992 (259 aa).

It belongs to the UPF0246 family.

The polypeptide is UPF0246 protein PFLU_0992 (Pseudomonas fluorescens (strain SBW25)).